Here is a 216-residue protein sequence, read N- to C-terminus: Probable nicotinate-nucleotide adenylyltransferase (216 aa).

It belongs to the NadD family.

It catalyses the reaction nicotinate beta-D-ribonucleotide + ATP + H(+) = deamido-NAD(+) + diphosphate. Its pathway is cofactor biosynthesis; NAD(+) biosynthesis; deamido-NAD(+) from nicotinate D-ribonucleotide: step 1/1. In terms of biological role, catalyzes the reversible adenylation of nicotinate mononucleotide (NaMN) to nicotinic acid adenine dinucleotide (NaAD). This Geobacter metallireducens (strain ATCC 53774 / DSM 7210 / GS-15) protein is Probable nicotinate-nucleotide adenylyltransferase.